The primary structure comprises 550 residues: Proteasome-associated ATPase (550 aa).

A coiled-coil region spans residues Glu9 to Gln48. Position 233–238 (Gly233–Leu238) interacts with ATP. The interval Lys528–Leu550 is disordered. The segment at Tyr549–Leu550 is docks into pockets in the proteasome alpha-ring.

Belongs to the AAA ATPase family. Homohexamer. Assembles into a hexameric ring structure that caps the 20S proteasome core. Strongly interacts with the prokaryotic ubiquitin-like protein Pup through a hydrophobic interface; the interacting region of ARC lies in its N-terminal coiled-coil domain. There is one Pup binding site per ARC hexamer ring. Upon ATP-binding, the C-terminus of ARC interacts with the alpha-rings of the proteasome core, possibly by binding to the intersubunit pockets.

The protein operates within protein degradation; proteasomal Pup-dependent pathway. In terms of biological role, ATPase which is responsible for recognizing, binding, unfolding and translocation of pupylated proteins into the bacterial 20S proteasome core particle. May be essential for opening the gate of the 20S proteasome via an interaction with its C-terminus, thereby allowing substrate entry and access to the site of proteolysis. Thus, the C-termini of the proteasomal ATPase may function like a 'key in a lock' to induce gate opening and therefore regulate proteolysis. This Jonesia denitrificans (strain ATCC 14870 / DSM 20603 / BCRC 15368 / CIP 55.134 / JCM 11481 / NBRC 15587 / NCTC 10816 / Prevot 55134) (Listeria denitrificans) protein is Proteasome-associated ATPase.